A 55-amino-acid polypeptide reads, in one-letter code: Protein CADMIUM TOLERANCE 1 (55 aa).

Residues 24-40 form a helical membrane-spanning segment; the sequence is GCLYACIFTALCCFCCY.

It belongs to the CYSTM1 family.

It is found in the cell membrane. The protein resides in the secreted. The protein localises to the cell wall. In terms of biological role, confers resistance to heavy metal ions (e.g. cadmium (CdCl(2)) and copper (CuCl(2))) by chelating them at the plasma membrane of root cells, thus stopping their entry and reducing their accumulation. Binds to aluminium (Al). The chain is Protein CADMIUM TOLERANCE 1 from Oryza sativa subsp. indica (Rice).